The chain runs to 346 residues: Putative serine/threonine-protein kinase K06H7.1 (346 aa).

One can recognise a Protein kinase domain in the interval 20–287 (YKVVQKLGEG…KLFKLLEDVM (268 aa)). Residues 26 to 34 (LGEGGCGSV) and lysine 50 contribute to the ATP site. Residue aspartate 141 is the Proton acceptor of the active site. The tract at residues 302–326 (PEKKKNPASQGNKFGLGKKGTKESG) is disordered.

This sequence belongs to the protein kinase superfamily. Ser/Thr protein kinase family.

The catalysed reaction is L-seryl-[protein] + ATP = O-phospho-L-seryl-[protein] + ADP + H(+). The enzyme catalyses L-threonyl-[protein] + ATP = O-phospho-L-threonyl-[protein] + ADP + H(+). This Caenorhabditis elegans protein is Putative serine/threonine-protein kinase K06H7.1.